The sequence spans 363 residues: MLNETVLAPLHREIGGKMVDFGGWDMPLHYGSQVEEHQKVRTDAGMFDVSHMTVVDVTGAGAKTFLQYVLANDVAKLTKNGKALYSGMLNHEGGVVDDLIVYLMEWGYRVVVNCATREKDLAWMVEHAKGFEVALNERDDLAMIAVQGPAAREKTAQILPELLTMDLDIFQGADVAALGDVTFFVARTGYTGEDGYEIMLPTSDADAFWRALMAVGVAPCGLGARDTLRLEAGMNLYGHEMDDNTSPLVANMAWTIAWQPEERNFIGREAISAEKAAGVTHKLVGLVLQDRGVLRAEQVVTCEGVEGEGVITSGTFSPTLSKSVALARVPVAFSGECTVAVRNKQLKALVVKPSFVRLGKALV.

It belongs to the GcvT family. As to quaternary structure, the glycine cleavage system is composed of four proteins: P, T, L and H.

It catalyses the reaction N(6)-[(R)-S(8)-aminomethyldihydrolipoyl]-L-lysyl-[protein] + (6S)-5,6,7,8-tetrahydrofolate = N(6)-[(R)-dihydrolipoyl]-L-lysyl-[protein] + (6R)-5,10-methylene-5,6,7,8-tetrahydrofolate + NH4(+). In terms of biological role, the glycine cleavage system catalyzes the degradation of glycine. This Saccharophagus degradans (strain 2-40 / ATCC 43961 / DSM 17024) protein is Aminomethyltransferase.